The following is a 495-amino-acid chain: Lysine--tRNA ligase (495 aa).

Residues Glu-406 and Glu-413 each contribute to the Mg(2+) site.

It belongs to the class-II aminoacyl-tRNA synthetase family. As to quaternary structure, homodimer. Mg(2+) serves as cofactor.

The protein resides in the cytoplasm. The catalysed reaction is tRNA(Lys) + L-lysine + ATP = L-lysyl-tRNA(Lys) + AMP + diphosphate. In Staphylococcus aureus (strain MW2), this protein is Lysine--tRNA ligase.